Here is a 331-residue protein sequence, read N- to C-terminus: UDP-galactose/UDP-glucose transporter 3 (331 aa).

The next 8 helical transmembrane spans lie at 11–31, 49–69, 80–100, 112–132, 135–155, 170–190, 206–226, and 245–265; these read VLLLSFCVAGIWAAYIYQGIL, HLAFLNLAQNVICLVWSYIMI, APWWTYWSAGITNTIGPAMGI, VLAKSSKMIPVMLMGSLVYGI, TLPEYLCTFLVAGGVSMFALL, APLGYGLCFLNLAFDGFTNAT, IMLGMNLWGTIYNMVYMFGLP, and WDILMYCLCGAVGQNFIFLTI. The short motif at 327–331 is the Di-lysine motif element; it reads KKKKA.

It belongs to the nucleotide-sugar transporter family. UDP-galactose:UMP antiporter (TC 2.A.7.11) subfamily. In terms of tissue distribution, mostly expressed in flowers, and, to a lower extent, in roots, stems and leaves.

Its subcellular location is the endoplasmic reticulum membrane. It localises to the golgi apparatus membrane. Its function is as follows. Essential sugar transporter required for the transport of UDP-glucose from the cytoplasm into the Golgi and the endoplasmic reticulum. Essential for pollen development and involved in embryo sac progress. The sequence is that of UDP-galactose/UDP-glucose transporter 3 from Arabidopsis thaliana (Mouse-ear cress).